The sequence spans 436 residues: Chromosomal replication initiator protein DnaA (436 aa).

The segment at 1–69 (MLADEILELL…AYLYEVKTGK (69 aa)) is domain I, interacts with DnaA modulators. Residues 69–99 (KKPEVEITSQTKLKNIKQNQVNVKQIKAQSS) form a domain II region. The segment at 100–314 (ILNPGYTFEN…GAIINLNAYA (215 aa)) is domain III, AAA+ region. Glycine 144, glycine 146, lysine 147, and threonine 148 together coordinate ATP. The segment at 315-436 (SLMRVEITLE…EIKNKILTKG (122 aa)) is domain IV, binds dsDNA.

The protein belongs to the DnaA family. In terms of assembly, oligomerizes as a right-handed, spiral filament on DNA at oriC.

The protein localises to the cytoplasm. Functionally, plays an essential role in the initiation and regulation of chromosomal replication. ATP-DnaA binds to the origin of replication (oriC) to initiate formation of the DNA replication initiation complex once per cell cycle. Binds the DnaA box (a 9 base pair repeat at the origin) and separates the double-stranded (ds)DNA. Forms a right-handed helical filament on oriC DNA; dsDNA binds to the exterior of the filament while single-stranded (ss)DNA is stabiized in the filament's interior. The ATP-DnaA-oriC complex binds and stabilizes one strand of the AT-rich DNA unwinding element (DUE), permitting loading of DNA polymerase. After initiation quickly degrades to an ADP-DnaA complex that is not apt for DNA replication. Binds acidic phospholipids. In Campylobacter concisus (strain 13826), this protein is Chromosomal replication initiator protein DnaA.